Reading from the N-terminus, the 548-residue chain is MAKEILFRDEARQRMAKGVNILADAVKVTLGPKGRNVVLEKSFGAPSITKDGVSVAREIELEDKFENMGAQMVKEVASKANDEAGDGTTTATVLAQAFVNEGLKSVTAGMNPMDLKRGIDQAVAAVVEELKKLSTPCDNTKSIEQVGTISANADKSVGEIIAQAMEKVGQEGVITVEEGQSLQNELDVVEGMQFDRGYLSPYFINNQEKMQVELEDPYILLVDKKISNIRELLPALENVAKAGKPLLIIAEDIEGEALATLVVNNMRGIIKCAAVKAPGFGDRRKAMLQDIAILTGGTVISEEVGLSLENASLEDLGTAKKVNIDKENTTIVDGAGQQADIDGRVEQIRKEIENSSSDYDKEKLQERVAKLAGGVAVIKIGAATEIEMKEKKARVDDALHATRAAVEEGVVPGGGVALVRALANVGTIKGDNDEQNAGIALTFRALEMPLRQIAYNAGAEASVIVQEVRNGKGNYGYNAASGEYGDMLEMGILDPAKVTRSALQAAASIAGLMITTEAMVADKPEENAGAGAPDMGGMGGMGGMGGMM.

ATP contacts are provided by residues 29 to 32 (TLGP), Lys50, 86 to 90 (DGTTT), Gly414, 478 to 480 (NAA), and Asp494.

This sequence belongs to the chaperonin (HSP60) family. In terms of assembly, forms a cylinder of 14 subunits composed of two heptameric rings stacked back-to-back. Interacts with the co-chaperonin GroES.

It localises to the cytoplasm. It catalyses the reaction ATP + H2O + a folded polypeptide = ADP + phosphate + an unfolded polypeptide.. Together with its co-chaperonin GroES, plays an essential role in assisting protein folding. The GroEL-GroES system forms a nano-cage that allows encapsulation of the non-native substrate proteins and provides a physical environment optimized to promote and accelerate protein folding. This is Chaperonin GroEL from Alcanivorax borkumensis (strain ATCC 700651 / DSM 11573 / NCIMB 13689 / SK2).